Here is a 598-residue protein sequence, read N- to C-terminus: Elongation factor 4 (598 aa).

Positions 2-183 (KNIRNFCIIA…AIINRVPAPS (182 aa)) constitute a tr-type G domain. Residues 14-19 (DHGKST) and 130-133 (NKVD) each bind GTP.

It belongs to the TRAFAC class translation factor GTPase superfamily. Classic translation factor GTPase family. LepA subfamily.

It is found in the cell inner membrane. The catalysed reaction is GTP + H2O = GDP + phosphate + H(+). Its function is as follows. Required for accurate and efficient protein synthesis under certain stress conditions. May act as a fidelity factor of the translation reaction, by catalyzing a one-codon backward translocation of tRNAs on improperly translocated ribosomes. Back-translocation proceeds from a post-translocation (POST) complex to a pre-translocation (PRE) complex, thus giving elongation factor G a second chance to translocate the tRNAs correctly. Binds to ribosomes in a GTP-dependent manner. In Christiangramia forsetii (strain DSM 17595 / CGMCC 1.15422 / KT0803) (Gramella forsetii), this protein is Elongation factor 4.